We begin with the raw amino-acid sequence, 446 residues long: Probable D-serine dehydratase (446 aa).

An N6-(pyridoxal phosphate)lysine modification is found at Lys116.

It belongs to the serine/threonine dehydratase family. DsdA subfamily. Pyridoxal 5'-phosphate is required as a cofactor.

It carries out the reaction D-serine = pyruvate + NH4(+). This is Probable D-serine dehydratase from Bacillus anthracis (strain CDC 684 / NRRL 3495).